The sequence spans 158 residues: Transcription elongation factor GreA (158 aa).

The protein belongs to the GreA/GreB family.

Necessary for efficient RNA polymerase transcription elongation past template-encoded arresting sites. The arresting sites in DNA have the property of trapping a certain fraction of elongating RNA polymerases that pass through, resulting in locked ternary complexes. Cleavage of the nascent transcript by cleavage factors such as GreA or GreB allows the resumption of elongation from the new 3'terminus. GreA releases sequences of 2 to 3 nucleotides. The chain is Transcription elongation factor GreA from Ruthia magnifica subsp. Calyptogena magnifica.